A 740-amino-acid polypeptide reads, in one-letter code: Phosphoribosylformylglycinamidine synthase subunit PurL (740 aa).

Histidine 50 is a catalytic residue. ATP-binding residues include tyrosine 53 and lysine 92. Mg(2+) is bound at residue glutamate 94. Residues 95–98 and arginine 117 each bind substrate; that span reads SHNH. Histidine 96 serves as the catalytic Proton acceptor. Position 118 (aspartate 118) interacts with Mg(2+). Residue glutamine 241 participates in substrate binding. Aspartate 269 contacts Mg(2+). A substrate-binding site is contributed by 313-315; that stretch reads ESQ. ATP is bound by residues aspartate 495 and glycine 532. Mg(2+) is bound at residue asparagine 533. Position 535 (serine 535) interacts with substrate.

It belongs to the FGAMS family. As to quaternary structure, monomer. Part of the FGAM synthase complex composed of 1 PurL, 1 PurQ and 2 PurS subunits.

It localises to the cytoplasm. It catalyses the reaction N(2)-formyl-N(1)-(5-phospho-beta-D-ribosyl)glycinamide + L-glutamine + ATP + H2O = 2-formamido-N(1)-(5-O-phospho-beta-D-ribosyl)acetamidine + L-glutamate + ADP + phosphate + H(+). It participates in purine metabolism; IMP biosynthesis via de novo pathway; 5-amino-1-(5-phospho-D-ribosyl)imidazole from N(2)-formyl-N(1)-(5-phospho-D-ribosyl)glycinamide: step 1/2. In terms of biological role, part of the phosphoribosylformylglycinamidine synthase complex involved in the purines biosynthetic pathway. Catalyzes the ATP-dependent conversion of formylglycinamide ribonucleotide (FGAR) and glutamine to yield formylglycinamidine ribonucleotide (FGAM) and glutamate. The FGAM synthase complex is composed of three subunits. PurQ produces an ammonia molecule by converting glutamine to glutamate. PurL transfers the ammonia molecule to FGAR to form FGAM in an ATP-dependent manner. PurS interacts with PurQ and PurL and is thought to assist in the transfer of the ammonia molecule from PurQ to PurL. This is Phosphoribosylformylglycinamidine synthase subunit PurL from Brucella abortus (strain S19).